Reading from the N-terminus, the 230-residue chain is Large ribosomal subunit protein uL1 (230 aa).

The protein belongs to the universal ribosomal protein uL1 family. Part of the 50S ribosomal subunit.

Binds directly to 23S rRNA. The L1 stalk is quite mobile in the ribosome, and is involved in E site tRNA release. Functionally, protein L1 is also a translational repressor protein, it controls the translation of the L11 operon by binding to its mRNA. In Nitrosomonas europaea (strain ATCC 19718 / CIP 103999 / KCTC 2705 / NBRC 14298), this protein is Large ribosomal subunit protein uL1.